Consider the following 973-residue polypeptide: UvrABC system protein A (973 aa).

34–41 (GLSGSGKS) lines the ATP pocket. ABC transporter domains follow at residues 330–609 (WAKS…PNSI) and 629–958 (AKKN…QFLK). 662–669 (GVSGGGKS) is an ATP binding site. The C4-type zinc finger occupies 761–787 (CEACQGDGVIKIEMHFLPDVYVTCDVC).

Belongs to the ABC transporter superfamily. UvrA family. As to quaternary structure, forms a heterotetramer with UvrB during the search for lesions.

It localises to the cytoplasm. Its function is as follows. The UvrABC repair system catalyzes the recognition and processing of DNA lesions. UvrA is an ATPase and a DNA-binding protein. A damage recognition complex composed of 2 UvrA and 2 UvrB subunits scans DNA for abnormalities. When the presence of a lesion has been verified by UvrB, the UvrA molecules dissociate. This is UvrABC system protein A from Mesorhizobium japonicum (strain LMG 29417 / CECT 9101 / MAFF 303099) (Mesorhizobium loti (strain MAFF 303099)).